The primary structure comprises 416 residues: Homeobox even-skipped homolog protein 1 (416 aa).

Disordered regions lie at residues 30-120 (AVSS…SDFY) and 138-178 (YQHS…LACS). Residues 72-82 (GLAGSAAGLGA) are compositionally biased toward low complexity. The span at 102-114 (DSLSGQGQPSSSD) shows a compositional bias: polar residues. A DNA-binding region (homeobox) is located at residues 183-242 (MRRYRTAFTREQIARLEKEFYRENYVSRPRRCELAAALNLPETTIKVWFQNRRMKDKRQR).

Belongs to the even-skipped homeobox family.

It is found in the nucleus. In terms of biological role, may play a role in the specification of neuronal cell types. May play a role in the dorsoventral specification of mesodermal cell fate. This Mus musculus (Mouse) protein is Homeobox even-skipped homolog protein 1 (Evx1).